Here is a 268-residue protein sequence, read N- to C-terminus: Tryptophan synthase alpha chain (268 aa).

Active-site proton acceptor residues include glutamate 49 and aspartate 60.

This sequence belongs to the TrpA family. Tetramer of two alpha and two beta chains.

It catalyses the reaction (1S,2R)-1-C-(indol-3-yl)glycerol 3-phosphate + L-serine = D-glyceraldehyde 3-phosphate + L-tryptophan + H2O. Its pathway is amino-acid biosynthesis; L-tryptophan biosynthesis; L-tryptophan from chorismate: step 5/5. The alpha subunit is responsible for the aldol cleavage of indoleglycerol phosphate to indole and glyceraldehyde 3-phosphate. This is Tryptophan synthase alpha chain from Pseudomonas aeruginosa (strain UCBPP-PA14).